A 159-amino-acid chain; its full sequence is Phosphopantetheine adenylyltransferase (159 aa).

Threonine 9 provides a ligand contact to substrate. ATP is bound by residues 9-10 (TF) and histidine 17. Lysine 41, leucine 73, and arginine 87 together coordinate substrate. ATP-binding positions include 88–90 (GLR), glutamate 98, and 123–129 (YSYISST).

The protein belongs to the bacterial CoaD family. In terms of assembly, homohexamer. Requires Mg(2+) as cofactor.

The protein localises to the cytoplasm. The enzyme catalyses (R)-4'-phosphopantetheine + ATP + H(+) = 3'-dephospho-CoA + diphosphate. Its pathway is cofactor biosynthesis; coenzyme A biosynthesis; CoA from (R)-pantothenate: step 4/5. Reversibly transfers an adenylyl group from ATP to 4'-phosphopantetheine, yielding dephospho-CoA (dPCoA) and pyrophosphate. In Azotobacter vinelandii (strain DJ / ATCC BAA-1303), this protein is Phosphopantetheine adenylyltransferase.